Reading from the N-terminus, the 268-residue chain is Nuclear protein UL4 homolog (268 aa).

The protein belongs to the alphaherpesvirinae HHV-1 UL4 family.

The protein resides in the host nucleus. This Gallid herpesvirus 2 (strain Chicken/Md5/ATCC VR-987) (GaHV-2) protein is Nuclear protein UL4 homolog (MDV016).